A 227-amino-acid polypeptide reads, in one-letter code: Apoptosis regulator OPG045 (227 aa).

It belongs to the orthopoxvirus OPG045 family. As to quaternary structure, homodimer. Interacts with host pro-apoptotic protein BCL2L11 (via BH3 domain). Interacts with host NLRP1. Interacts with host BAK.

The protein resides in the host mitochondrion outer membrane. It is found in the host cytoplasm. Its function is as follows. Plays a role in evading host innate immune response by inhibiting host inflammasome activation. Interacts with and inhibits NLR-mediated interleukin-1 beta/IL1B production in infected cells. At the host mitochondria outer membrane, interacts with the BH3 domain of host BAK and prevents BAK from binding active BAX. In turn, host apoptosis is inhibited. The chain is Apoptosis regulator OPG045 (OPG045) from Oryctolagus cuniculus (Rabbit).